We begin with the raw amino-acid sequence, 319 residues long: MNKKKDSLFKTIKKNNIINVITTESFSKKIIKLNKPDWIKIKIPVDTFRIREIKSALRKNNLHSVCEEANCPNLPECFNRGTATFMILGSRCTRNCPFCAVSHGKPNSLNVEEPNNLAKTIFDMGIDYVVITSVVRDDLYDGGAQHFVNCIKSIRKKNKVKIEILVPDFRGRVELILKIFNSGLPDVFNHNVENVPRLYKKVRPGADYKKSLFLLESFKKKYSNIPTKSGLMLGLGEKDTEIIQVMKDLYSNGVTLLTVGQYLQPSINHIPVQRYIPLSEFKNIKKEALSIGFTNAFCGPFVRSSYHASFQANKLIKKI.

[4Fe-4S] cluster contacts are provided by Cys-66, Cys-71, Cys-77, Cys-92, Cys-96, Cys-99, and Ser-305. The 217-residue stretch at 78–294 folds into the Radical SAM core domain; that stretch reads FNRGTATFMI…KKEALSIGFT (217 aa).

Belongs to the radical SAM superfamily. Lipoyl synthase family. [4Fe-4S] cluster is required as a cofactor.

The protein resides in the cytoplasm. The catalysed reaction is [[Fe-S] cluster scaffold protein carrying a second [4Fe-4S](2+) cluster] + N(6)-octanoyl-L-lysyl-[protein] + 2 oxidized [2Fe-2S]-[ferredoxin] + 2 S-adenosyl-L-methionine + 4 H(+) = [[Fe-S] cluster scaffold protein] + N(6)-[(R)-dihydrolipoyl]-L-lysyl-[protein] + 4 Fe(3+) + 2 hydrogen sulfide + 2 5'-deoxyadenosine + 2 L-methionine + 2 reduced [2Fe-2S]-[ferredoxin]. The protein operates within protein modification; protein lipoylation via endogenous pathway; protein N(6)-(lipoyl)lysine from octanoyl-[acyl-carrier-protein]: step 2/2. Functionally, catalyzes the radical-mediated insertion of two sulfur atoms into the C-6 and C-8 positions of the octanoyl moiety bound to the lipoyl domains of lipoate-dependent enzymes, thereby converting the octanoylated domains into lipoylated derivatives. The polypeptide is Lipoyl synthase (Buchnera aphidicola subsp. Schizaphis graminum (strain Sg)).